We begin with the raw amino-acid sequence, 280 residues long: S-methyl-5'-thioadenosine phosphorylase (280 aa).

Phosphate contacts are provided by residues S18, 60–61 (RH), and 93–94 (TA). M196 is a substrate binding site. Residue T197 participates in phosphate binding. Residue 220-222 (DYD) coordinates substrate.

The protein belongs to the PNP/MTAP phosphorylase family. MTAP subfamily. In terms of assembly, homotrimer.

Its subcellular location is the cytoplasm. The protein localises to the nucleus. The enzyme catalyses S-methyl-5'-thioadenosine + phosphate = 5-(methylsulfanyl)-alpha-D-ribose 1-phosphate + adenine. It functions in the pathway amino-acid biosynthesis; L-methionine biosynthesis via salvage pathway; S-methyl-5-thio-alpha-D-ribose 1-phosphate from S-methyl-5'-thioadenosine (phosphorylase route): step 1/1. In terms of biological role, catalyzes the reversible phosphorylation of S-methyl-5'-thioadenosine (MTA) to adenine and 5-methylthioribose-1-phosphate. Involved in the breakdown of MTA, a major by-product of polyamine biosynthesis. Responsible for the first step in the methionine salvage pathway after MTA has been generated from S-adenosylmethionine. Has broad substrate specificity with 6-aminopurine nucleosides as preferred substrates. In Ciona intestinalis (Transparent sea squirt), this protein is S-methyl-5'-thioadenosine phosphorylase.